Reading from the N-terminus, the 382-residue chain is MGILGLSKLIADICPQAIKESDIKNYFGRKVAIDASMCLYQFLIAVRAEGAQLTNVDGETTSHLMGMFYRTIRLLENGIKPVYVFDGKPPISKSGELAKRAERREDAQKALEKATEAGNEADMDKFNRRLVKVTKEHANEAKELLKLMGVPYVEAPCEAEAQCAALVKAGKVYATATEDMDALTFGSGILLRHLTFSEARKMPVKEFSYAKVLDGFGLTSQEFIDLCILLGCDYCDGIRGIGPKRATELMNSYKDIETILEKIDRKKYTVPEDWNYQIARELFVNPEVADPSSLELKWFDPDEDGLVRFFCGDRQFNEDRVRSGAKKILKCKSSQTQGRLDSFFKVIPAACGTTPKRKADDKNNVQQKKSKTAGNTKGKRPK.

Positions 1 to 104 (MGILGLSKLI…GELAKRAERR (104 aa)) are N-domain. Residue aspartate 34 coordinates Mg(2+). DNA-binding residues include arginine 47 and arginine 70. A Mg(2+)-binding site is contributed by aspartate 86. The disordered stretch occupies residues 95–118 (GELAKRAERREDAQKALEKATEAG). A compositionally biased stretch (basic and acidic residues) spans 96–115 (ELAKRAERREDAQKALEKAT). The interval 122-253 (DMDKFNRRLV…KRATELMNSY (132 aa)) is I-domain. Mg(2+) is bound by residues glutamate 158, glutamate 160, aspartate 179, and aspartate 181. Residue glutamate 158 coordinates DNA. DNA contacts are provided by glycine 231 and aspartate 233. Aspartate 233 is a Mg(2+) binding site. The interval 336-344 (TQGRLDSFF) is interaction with PCNA. Residues 353–382 (TTPKRKADDKNNVQQKKSKTAGNTKGKRPK) are disordered. The segment covering 364-375 (NVQQKKSKTAGN) has biased composition (polar residues).

This sequence belongs to the XPG/RAD2 endonuclease family. FEN1 subfamily. As to quaternary structure, interacts with PCNA. Three molecules of FEN1 bind to one PCNA trimer with each molecule binding to one PCNA monomer. PCNA stimulates the nuclease activity without altering cleavage specificity. It depends on Mg(2+) as a cofactor. Post-translationally, phosphorylated. Phosphorylation upon DNA damage induces relocalization to the nuclear plasma.

It is found in the nucleus. It localises to the nucleolus. The protein localises to the nucleoplasm. The protein resides in the mitochondrion. Structure-specific nuclease with 5'-flap endonuclease and 5'-3' exonuclease activities involved in DNA replication and repair. During DNA replication, cleaves the 5'-overhanging flap structure that is generated by displacement synthesis when DNA polymerase encounters the 5'-end of a downstream Okazaki fragment. It enters the flap from the 5'-end and then tracks to cleave the flap base, leaving a nick for ligation. Also involved in the long patch base excision repair (LP-BER) pathway, by cleaving within the apurinic/apyrimidinic (AP) site-terminated flap. Acts as a genome stabilization factor that prevents flaps from equilibrating into structures that lead to duplications and deletions. Also possesses 5'-3' exonuclease activity on nicked or gapped double-stranded DNA, and exhibits RNase H activity. Also involved in replication and repair of rDNA and in repairing mitochondrial DNA. The chain is Flap endonuclease 1 from Glossina morsitans morsitans (Savannah tsetse fly).